The chain runs to 478 residues: Dynein regulatory complex subunit 4 (478 aa).

Residues Met1 to Ala12 show a composition bias toward basic residues. Residues Met1–Glu32 are disordered. The regulates microtubule-binding stretch occupies residues Met1 to Ala114. Coiled-coil stretches lie at residues Glu24–Asp201 and Asn243–Val427. Residues Glu115–Met258 are microtubule-binding. The interval Gln357–Thr478 is interaction with SMO.

It belongs to the DRC4 family. In terms of assembly, component of the nexin-dynein regulatory complex (N-DRC). Interacts with microtubules. Interacts with SMO. Interacts (via coiled-coil domains) with RAB3B (in GTP-bound form). Interacts with DRC1. Interacts with DRC7.

Its subcellular location is the cytoplasm. The protein localises to the cytoskeleton. The protein resides in the cell projection. It localises to the cilium. It is found in the flagellum. Its subcellular location is the cilium axoneme. The protein localises to the cilium basal body. The protein resides in the golgi apparatus. It localises to the flagellum axoneme. Component of the nexin-dynein regulatory complex (N-DRC), a key regulator of ciliary/flagellar motility which maintains the alignment and integrity of the distal axoneme and regulates microtubule sliding in motile axonemes. Plays an important role in the assembly of the N-DRC linker. Plays dual roles at both the primary (or non-motile) cilia to regulate hedgehog signaling and in motile cilia to coordinate cilia movement. Required for proper motile cilia functioning. Positively regulates ciliary smoothened (SMO)-dependent Hedgehog (Hh) signaling pathway by facilitating the trafficking of SMO into the cilium and the stimulation of SMO activity in a GRK2-dependent manner. The protein is Dynein regulatory complex subunit 4 (Gas8) of Rattus norvegicus (Rat).